The sequence spans 175 residues: Ribosome maturation factor RimM (175 aa).

In terms of domain architecture, PRC barrel spans 96-175; the sequence is EGDYYWHDLI…TIEVDWDAGF (80 aa).

Belongs to the RimM family. Binds ribosomal protein uS19.

The protein resides in the cytoplasm. Its function is as follows. An accessory protein needed during the final step in the assembly of 30S ribosomal subunit, possibly for assembly of the head region. Essential for efficient processing of 16S rRNA. May be needed both before and after RbfA during the maturation of 16S rRNA. It has affinity for free ribosomal 30S subunits but not for 70S ribosomes. In Haemophilus influenzae (strain PittEE), this protein is Ribosome maturation factor RimM.